The following is a 1296-amino-acid chain: Histone-lysine N-methyltransferase EHMT1 (1296 aa).

Disordered regions lie at residues 1 to 111 (MAAA…NHVT) and 170 to 200 (PQTP…TDVR). A2 carries the post-translational modification N-acetylalanine. A compositionally biased stretch (basic and acidic residues) spans 14-31 (QETKQDCCMKTELLREDT). K23 is covalently cross-linked (Glycyl lysine isopeptide (Lys-Gly) (interchain with G-Cter in SUMO1); alternate). A Glycyl lysine isopeptide (Lys-Gly) (interchain with G-Cter in SUMO2); alternate cross-link involves residue K23. Residues 77 to 89 (NTRASPQEGTNRV) show a composition bias toward polar residues. Over residues 97-106 (VSERDTEVGK) the composition is skewed to basic and acidic residues. Residues K191, K229, K232, K315, and K325 each participate in a glycyl lysine isopeptide (Lys-Gly) (interchain with G-Cter in SUMO2) cross-link. Residues 341-470 (SLEMDSEDED…SSPGSMEQAA (130 aa)) form a disordered region. The span at 342-360 (LEMDSEDEDSDELEDDEDH) shows a compositional bias: acidic residues. Residues 371–391 (EDSRTSKESMSETDRAAKMDG) show a composition bias toward basic and acidic residues. Positions 392–414 (DSEEEQESPDTGEDEDGGDESDL) are enriched in acidic residues. A Glycyl lysine isopeptide (Lys-Gly) (interchain with G-Cter in SUMO2) cross-link involves residue K430. At S433 the chain carries Phosphoserine. Residues 438-450 (PARKRRRRSRKKP) are compositionally biased toward basic residues. The residue at position 481 (S481) is a Phosphoserine. Glycyl lysine isopeptide (Lys-Gly) (interchain with G-Cter in SUMO2) cross-links involve residues K559, K644, K659, and K729. Positions 653–714 (LAPGQEKSLA…PTSGLSQGPG (62 aa)) are disordered. ANK repeat units follow at residues 735-764 (FHPK…DPNF), 770-799 (SKRS…NIDT), 803-832 (DQRT…QVDP), 836-866 (EGST…DVNC), 870-899 (GGWT…DINI), 903-932 (EENI…DLHA), 936-965 (HGDS…DVTL), and 969-1002 (EGET…DKPV). The segment at 903 to 905 (EEN) is histone H3K9me binding. S1046 carries the phosphoserine modification. Residues 1058–1121 (QYCVCVDDCS…NCRNRVVQNG (64 aa)) form the Pre-SET domain. Zn(2+) contacts are provided by C1060, C1062, C1066, C1071, C1073, C1103, C1107, C1109, and C1113. The SET domain maps to 1124–1241 (ARLQLYRTQD…AGEQLGFDYG (118 aa)). Residues 1134 to 1136 (MGW), Y1171, and 1198 to 1199 (NH) each bind S-adenosyl-L-methionine. Residues 1160-1179 (DSEADVREEDSYLFDLDNKD) form an interaction with histone H3 region. C1201 lines the Zn(2+) pocket. The tract at residues 1240-1243 (YGER) is interaction with histone H3. C1254 contributes to the Zn(2+) binding site. An S-adenosyl-L-methionine-binding site is contributed by R1255. The Zn(2+) site is built by C1256 and C1261. The interval 1271 to 1296 (RQASAAQEPQENGLPDTSSAAAADPL) is disordered.

It belongs to the class V-like SAM-binding methyltransferase superfamily. As to quaternary structure, interacts with WIZ. Part of the E2F6.com-1 complex in G0 phase composed of E2F6, MGA, MAX, TFDP1, CBX3, BAT8, EHMT1, RING1, RNF2, MBLR, L3MBTL2 and YAF2. Interacts with MPHOSPH8. Interacts with CDYL. Interacts with REST only in the presence of CDYL. Part of a complex containing at least CDYL, REST, WIZ, SETB1, EHMT1 and EHMT2. Heterodimer; heterodimerizes with EHMT2. Interacts (via ANK repeats) with RELA (when monomethylated at 'Lys-310'). Interacts with Baz2b. As to expression, ubiquitous.

The protein localises to the nucleus. It is found in the chromosome. The catalysed reaction is N(6)-methyl-L-lysyl(9)-[histone H3] + S-adenosyl-L-methionine = N(6),N(6)-dimethyl-L-lysyl(9)-[histone H3] + S-adenosyl-L-homocysteine + H(+). The enzyme catalyses L-lysyl(9)-[histone H3] + S-adenosyl-L-methionine = N(6)-methyl-L-lysyl(9)-[histone H3] + S-adenosyl-L-homocysteine + H(+). Methyltransferase activity is inhibited by BIX-01294. Efficiently inhibited by compound E72, a BIX-01294 derivative in which the diazepane ring and the benzyl are replaced with a 3-dimethylaminopropyl and a 5-aminopentyl group at sites B and C, respectively. Functionally, histone methyltransferase that specifically mono- and dimethylates 'Lys-9' of histone H3 (H3K9me1 and H3K9me2, respectively) in euchromatin. H3K9me represents a specific tag for epigenetic transcriptional repression by recruiting HP1 proteins to methylated histones. Also weakly methylates 'Lys-27' of histone H3 (H3K27me). Also required for DNA methylation, the histone methyltransferase activity is not required for DNA methylation, suggesting that these 2 activities function independently. Probably targeted to histone H3 by different DNA-binding proteins like E2F6, MGA, MAX and/or DP1. During G0 phase, it probably contributes to silencing of MYC- and E2F-responsive genes, suggesting a role in G0/G1 transition in cell cycle. In addition to the histone methyltransferase activity, also methylates non-histone proteins: mediates dimethylation of 'Lys-373' of p53/TP53. Represses the expression of mitochondrial function-related genes, perhaps by occupying their promoter regions, working in concert with probable chromatin reader Baz2b. The sequence is that of Histone-lysine N-methyltransferase EHMT1 (Ehmt1) from Mus musculus (Mouse).